The following is a 405-amino-acid chain: Fragilysin (405 aa).

A signal peptide spans 1 to 25; sequence MFILNFNKMKNVKLLLMLGTAALLA. H356 is a Zn(2+) binding site. E357 is an active-site residue. Zn(2+) is bound by residues H360 and H366.

It belongs to the peptidase M10C family. Requires Zn(2+) as cofactor.

The protein localises to the secreted. The catalysed reaction is Broad proteolytic specificity, bonds hydrolyzed includes -Gly-|-Leu-, -Met-|-Leu-, -Phe-|-Leu-, -Cys-|-Leu-, -Leu-|-Gly-.. Functionally, diarrheal toxin that hydrolyzes gelatin, azocoll, actin, tropomyosin, and fibrinogen. In Bacteroides fragilis, this protein is Fragilysin (btfP).